Consider the following 102-residue polypeptide: Small ribosomal subunit protein uS10 (102 aa).

Belongs to the universal ribosomal protein uS10 family. As to quaternary structure, part of the 30S ribosomal subunit.

Its function is as follows. Involved in the binding of tRNA to the ribosomes. The protein is Small ribosomal subunit protein uS10 of Planobispora rosea.